The primary structure comprises 367 residues: Centrosomal protein of 41 kDa (367 aa).

The segment at 89–121 (HKLEGGNSPASDADAELTAGTNGKGSPNGTPPS) is disordered. Over residues 107–116 (AGTNGKGSPN) the composition is skewed to polar residues. The Rhodanese domain maps to 169 to 266 (PDCPFLLLDV…LAQKVPEGLI (98 aa)). The segment at 319–367 (LPSDTASRLSRGSSGRDSKATTARSSPSLPSTAGSRMLSRSSIQNRPWK) is disordered. Residues 338–367 (ATTARSSPSLPSTAGSRMLSRSSIQNRPWK) show a composition bias toward polar residues.

The protein belongs to the CEP41 family.

Its subcellular location is the cytoplasm. The protein resides in the cytoskeleton. The protein localises to the microtubule organizing center. It is found in the centrosome. It localises to the cell projection. Its subcellular location is the cilium. The protein resides in the cilium basal body. Its function is as follows. Required during ciliogenesis for tubulin glutamylation in cilium. Probably acts by participating in the transport of tubulin polyglutamylases between the basal body and the cilium. In Gallus gallus (Chicken), this protein is Centrosomal protein of 41 kDa (CEP41).